The following is a 327-amino-acid chain: Undecaprenyl-phosphate 4-deoxy-4-formamido-L-arabinose transferase (327 aa).

2 helical membrane-spanning segments follow: residues 233–253 and 268–288; these read ILSLIGSVVALSGFLLALLLI and VFTLFAVLFMFIGAQFVGMGL.

Belongs to the glycosyltransferase 2 family.

It localises to the cell inner membrane. It catalyses the reaction UDP-4-deoxy-4-formamido-beta-L-arabinose + di-trans,octa-cis-undecaprenyl phosphate = 4-deoxy-4-formamido-alpha-L-arabinopyranosyl di-trans,octa-cis-undecaprenyl phosphate + UDP. The protein operates within glycolipid biosynthesis; 4-amino-4-deoxy-alpha-L-arabinose undecaprenyl phosphate biosynthesis; 4-amino-4-deoxy-alpha-L-arabinose undecaprenyl phosphate from UDP-4-deoxy-4-formamido-beta-L-arabinose and undecaprenyl phosphate: step 1/2. It functions in the pathway bacterial outer membrane biogenesis; lipopolysaccharide biosynthesis. In terms of biological role, catalyzes the transfer of 4-deoxy-4-formamido-L-arabinose from UDP to undecaprenyl phosphate. The modified arabinose is attached to lipid A and is required for resistance to polymyxin and cationic antimicrobial peptides. This is Undecaprenyl-phosphate 4-deoxy-4-formamido-L-arabinose transferase from Pectobacterium atrosepticum (strain SCRI 1043 / ATCC BAA-672) (Erwinia carotovora subsp. atroseptica).